The sequence spans 153 residues: Fucose mutarotase (153 aa).

His24 (proton donor) is an active-site residue. Asp32 serves as a coordination point for substrate. The active site involves Asp69. Substrate-binding residues include Met79, Tyr120, Tyr138, and Asn140. Tyr120 is an active-site residue.

It belongs to the RbsD / FucU family. As to quaternary structure, mainly homodimer, but also exists as homotetramer, homooctamer, and homodecamer. The homodimeric form seems catalytically inactive. In terms of tissue distribution, widely expressed in various tissues and cell lines, including kidney, liver, and pancreas, marginally in muscle and testis.

It carries out the reaction alpha-L-fucose = beta-L-fucose. It participates in carbohydrate metabolism; L-fucose metabolism. Involved in the interconversion between alpha- and beta-L-fucoses. L-Fucose (6-deoxy-L-galactose) exists as alpha-L-fucose (29.5%) and beta-L-fucose (70.5%), the beta-form is metabolized through the salvage pathway. GDP-L-fucose formed either by the de novo or salvage pathways is transported into the endoplasmic reticulum, where it serves as a substrate for N- and O-glycosylations by fucosyltransferases. Fucosylated structures expressed on cell surfaces or secreted in biological fluids are believed to play a critical role in cell-cell adhesion and recognition processes. The sequence is that of Fucose mutarotase (Fuom) from Mus musculus (Mouse).